The chain runs to 213 residues: ATP phosphoribosyltransferase (213 aa).

It belongs to the ATP phosphoribosyltransferase family. Short subfamily. Heteromultimer composed of HisG and HisZ subunits.

The protein localises to the cytoplasm. It carries out the reaction 1-(5-phospho-beta-D-ribosyl)-ATP + diphosphate = 5-phospho-alpha-D-ribose 1-diphosphate + ATP. It functions in the pathway amino-acid biosynthesis; L-histidine biosynthesis; L-histidine from 5-phospho-alpha-D-ribose 1-diphosphate: step 1/9. In terms of biological role, catalyzes the condensation of ATP and 5-phosphoribose 1-diphosphate to form N'-(5'-phosphoribosyl)-ATP (PR-ATP). Has a crucial role in the pathway because the rate of histidine biosynthesis seems to be controlled primarily by regulation of HisG enzymatic activity. In Thermoanaerobacter pseudethanolicus (strain ATCC 33223 / 39E) (Clostridium thermohydrosulfuricum), this protein is ATP phosphoribosyltransferase.